Here is a 581-residue protein sequence, read N- to C-terminus: Nicotinic acid-CoA ligase pyr1 (581 aa).

Position 204–215 (204–215 (MFLTSGTSGLPK)) interacts with AMP. Positions 477-555 (EIEGILLKDP…DEIPRTGIGK (79 aa)) are AMP-binding.

The protein belongs to the ATP-dependent AMP-binding enzyme family.

It catalyses the reaction nicotinate + ATP + CoA = nicotinyl-CoA + AMP + diphosphate. It functions in the pathway secondary metabolite biosynthesis; terpenoid biosynthesis. Nicotinic acid-CoA ligase; part of the gene cluster that mediates the biosynthesis of pyripyropene A, a specific human acyl-coenzyme A:cholesterol acyltransferase 2 inhibitor. The first step of the pathway is the synthesis of nicotinyl-CoA from nicotinic acid by the nicotinic acid-CoA ligase pyr1. Nicotinyl-CoA is then a substrate of polyketide synthase pyr2 to produce 4-hydroxy-6-(3-pyridinyl)-2H-pyran-2-one (HPPO) which is further prenylated by the polyprenyl transferase pyr6 to yield farnesyl-HPPO. The next steps consist of an epoxidation of farnesyl-HPPO to epoxyfarnesyl-HPPO by FAD-dependent monooxygenase pyr5 and a cyclization of the terpenoid portion by the terpene cyclase pyr4 to yield deacetyl-pyripyropene E. The 2 cytochrome P450 monooxygenases pyr3 and pyr9, and the 2 acetyltransferases pyr7 and pyr8 are involved in the conversion of deacetyl-pyripyropene E into pyripyropene A through several cycles of oxidation and acetylation steps. Pyr7 acetylates deacetyl-pyripyropene E to pyripyropene E which is oxidized to 11-deacetyl-pyripyropene O by pyr3, which is in turn acetylated into pyripyropene O by pyr8. Pyripyropene O is then oxidized to deacetyl-pyripyropene A by pyr9. Deacetyl-pyripyropene A is finally acetylated to pyripyropene A by pyr8. The chain is Nicotinic acid-CoA ligase pyr1 from Aspergillus fumigatus (strain ATCC MYA-4609 / CBS 101355 / FGSC A1100 / Af293) (Neosartorya fumigata).